The sequence spans 123 residues: MAKIKARDLRGKKKEELLKQLDDLKNELSQLRVAKVTGGAASKLSKIRVVRKSIARVLTVITQTQKENLRKFYKGKKYKPLDLRPKKTRALRRRLNKHEESLRTKKQQRKDLLYSIRKFAVKA.

It belongs to the universal ribosomal protein uL29 family. As to quaternary structure, component of the large ribosomal subunit.

It is found in the cytoplasm. Functionally, component of the large ribosomal subunit. The ribosome is a large ribonucleoprotein complex responsible for the synthesis of proteins in the cell. The polypeptide is Large ribosomal subunit protein uL29 (rpl35) (Hippocampus comes (Tiger tail seahorse)).